A 297-amino-acid chain; its full sequence is tRNA-cytidine(32) 2-sulfurtransferase (297 aa).

A PP-loop motif motif is present at residues 61-66; the sequence is SGGKDS. Residues Cys-136, Cys-139, and Cys-227 each coordinate [4Fe-4S] cluster.

It belongs to the TtcA family. In terms of assembly, homodimer. Requires Mg(2+) as cofactor. The cofactor is [4Fe-4S] cluster.

The protein localises to the cytoplasm. The enzyme catalyses cytidine(32) in tRNA + S-sulfanyl-L-cysteinyl-[cysteine desulfurase] + AH2 + ATP = 2-thiocytidine(32) in tRNA + L-cysteinyl-[cysteine desulfurase] + A + AMP + diphosphate + H(+). Its pathway is tRNA modification. Catalyzes the ATP-dependent 2-thiolation of cytidine in position 32 of tRNA, to form 2-thiocytidine (s(2)C32). The sulfur atoms are provided by the cysteine/cysteine desulfurase (IscS) system. The sequence is that of tRNA-cytidine(32) 2-sulfurtransferase from Paracoccus denitrificans (strain Pd 1222).